We begin with the raw amino-acid sequence, 156 residues long: 6,7-dimethyl-8-ribityllumazine synthase (156 aa).

5-amino-6-(D-ribitylamino)uracil is bound by residues Phe-23, 57 to 59 (AFE), and 81 to 83 (AVI). Position 86–87 (86–87 (AT)) interacts with (2S)-2-hydroxy-3-oxobutyl phosphate. The active-site Proton donor is the His-89. Asn-114 contacts 5-amino-6-(D-ribitylamino)uracil. Arg-128 lines the (2S)-2-hydroxy-3-oxobutyl phosphate pocket.

This sequence belongs to the DMRL synthase family.

It carries out the reaction (2S)-2-hydroxy-3-oxobutyl phosphate + 5-amino-6-(D-ribitylamino)uracil = 6,7-dimethyl-8-(1-D-ribityl)lumazine + phosphate + 2 H2O + H(+). It participates in cofactor biosynthesis; riboflavin biosynthesis; riboflavin from 2-hydroxy-3-oxobutyl phosphate and 5-amino-6-(D-ribitylamino)uracil: step 1/2. In terms of biological role, catalyzes the formation of 6,7-dimethyl-8-ribityllumazine by condensation of 5-amino-6-(D-ribitylamino)uracil with 3,4-dihydroxy-2-butanone 4-phosphate. This is the penultimate step in the biosynthesis of riboflavin. This chain is 6,7-dimethyl-8-ribityllumazine synthase, found in Aliarcobacter butzleri (strain RM4018) (Arcobacter butzleri).